An 82-amino-acid chain; its full sequence is Turripeptide Gsp9.1 (82 aa).

The signal sequence occupies residues 1–23; sequence MMAKLMITVMMVLLLSLQQGADG. Positions 24–46 are excised as a propeptide; that stretch reads RSKRWRKNQMAASSIMRNLITAR. 4-hydroxyproline is present on residues P49 and P50. 3 disulfides stabilise this stretch: C53/C68, C58/C72, and C64/C79. 4-carboxyglutamate is present on residues E60 and E63.

The protein belongs to the Pg turripeptide superfamily. In terms of tissue distribution, expressed by the venom duct.

It is found in the secreted. The protein is Turripeptide Gsp9.1 of Gemmula speciosa (Splendid gem-turris).